Consider the following 152-residue polypeptide: UPF0756 membrane protein Daud_1310 (152 aa).

4 helical membrane-spanning segments follow: residues 14 to 34, 51 to 71, 76 to 96, and 112 to 132; these read LVGV…LLFI, LELG…NGKI, IIYN…ALAT, and IIFG…GMPV.

This sequence belongs to the UPF0756 family.

The protein resides in the cell membrane. The chain is UPF0756 membrane protein Daud_1310 from Desulforudis audaxviator (strain MP104C).